The following is a 259-amino-acid chain: MINPIALKCGPLAIHWYALCILSGLVLAVYLASKEAPKKGISSDAIFDFILIAFPLAIVGARIYYVIFEWSYYVKHLDEIIAIWNGGIAIYGGLITGALVLLAYCYNKVLNPIHFLDIAAPSVMVAQAIGRWGNFINQEAYGKAVSQLNYLPSFIQKQMFIEGSYRIPTFLYESLWNLLGFVIIMMWRRKPKSLLDGEIFAFYLIWYGSGRLVIEGMRTDSLMFLGIRISQYVSALLIIIGLIFVIKRRRQKGISYYQE.

The next 4 helical transmembrane spans lie at L12–A32, I41–A61, I80–V100, and V109–I129. R131 provides a ligand contact to a 1,2-diacyl-sn-glycero-3-phospho-(1'-sn-glycerol). 3 helical membrane-spanning segments follow: residues I167 to W187, L194 to I214, and G226 to I246.

Belongs to the Lgt family.

It localises to the cell membrane. It carries out the reaction L-cysteinyl-[prolipoprotein] + a 1,2-diacyl-sn-glycero-3-phospho-(1'-sn-glycerol) = an S-1,2-diacyl-sn-glyceryl-L-cysteinyl-[prolipoprotein] + sn-glycerol 1-phosphate + H(+). It participates in protein modification; lipoprotein biosynthesis (diacylglyceryl transfer). Its function is as follows. Catalyzes the transfer of the diacylglyceryl group from phosphatidylglycerol to the sulfhydryl group of the N-terminal cysteine of a prolipoprotein, the first step in the formation of mature lipoproteins. The protein is Phosphatidylglycerol--prolipoprotein diacylglyceryl transferase of Streptococcus pyogenes serotype M49 (strain NZ131).